The chain runs to 361 residues: Phosphoserine aminotransferase (361 aa).

R42 lines the L-glutamate pocket. Residues 76–77, W102, T153, D173, and Q196 contribute to the pyridoxal 5'-phosphate site; that span reads AR. The residue at position 197 (K197) is an N6-(pyridoxal phosphate)lysine. 238–239 provides a ligand contact to pyridoxal 5'-phosphate; sequence NT.

This sequence belongs to the class-V pyridoxal-phosphate-dependent aminotransferase family. SerC subfamily. As to quaternary structure, homodimer. It depends on pyridoxal 5'-phosphate as a cofactor.

The protein localises to the cytoplasm. It carries out the reaction O-phospho-L-serine + 2-oxoglutarate = 3-phosphooxypyruvate + L-glutamate. The enzyme catalyses 4-(phosphooxy)-L-threonine + 2-oxoglutarate = (R)-3-hydroxy-2-oxo-4-phosphooxybutanoate + L-glutamate. Its pathway is amino-acid biosynthesis; L-serine biosynthesis; L-serine from 3-phospho-D-glycerate: step 2/3. It functions in the pathway cofactor biosynthesis; pyridoxine 5'-phosphate biosynthesis; pyridoxine 5'-phosphate from D-erythrose 4-phosphate: step 3/5. Catalyzes the reversible conversion of 3-phosphohydroxypyruvate to phosphoserine and of 3-hydroxy-2-oxo-4-phosphonooxybutanoate to phosphohydroxythreonine. This chain is Phosphoserine aminotransferase, found in Buchnera aphidicola subsp. Acyrthosiphon pisum (strain 5A).